Here is an 815-residue protein sequence, read N- to C-terminus: SNF1 protein kinase subunit beta-1 (815 aa).

Over residues 1–11 (MGNSPSTQDPS) the composition is skewed to polar residues. Disordered regions lie at residues 1-88 (MGNS…TIDK) and 117-146 (SDDH…TVKR). Residue glycine 2 is the site of N-myristoyl glycine attachment. Positions 12–31 (HSTKKEHGHHFHDAFNKDRQ) are enriched in basic and acidic residues. Polar residues predominate over residues 32-42 (GSITSQLFNNR). Serine 33 bears the Phosphoserine mark. Basic and acidic residues-rich tracts occupy residues 72 to 88 (PSTD…TIDK) and 117 to 129 (SDDH…EEQV). 6 positions are modified to phosphoserine: serine 181, serine 198, serine 200, serine 206, serine 209, and serine 220. Disordered regions lie at residues 311-335 (HANN…NDDF) and 362-389 (KHHN…FASL). The span at 313-326 (NNNGNIENNTRNKG) shows a compositional bias: low complexity. At serine 331 the chain carries Phosphoserine. The span at 363-376 (HHNKTKKAQNKKIR) shows a compositional bias: basic residues. Positions 377-389 (SVSNSRRSSFASL) are enriched in low complexity. Residues 473–716 (VSTDIASALK…LQQGGNIDAE (244 aa)) form a kinase-interacting sequence (KIS); required for interaction with SNF1 region. Serine 494 and serine 497 each carry phosphoserine. The interval 581 to 616 (EPTLDEELPKRPELKRFPSSSRKSSYYSAKGVERPS) is disordered. Positions 587 to 596 (ELPKRPELKR) are enriched in basic and acidic residues. The span at 599 to 608 (SSSRKSSYYS) shows a compositional bias: low complexity. Serine 643 bears the Phosphoserine mark. Residues 724 to 804 (SRYPVPDLPI…FITQVVYAPC (81 aa)) form an association with SNF1 kinase complex (ASC) domain; required for interaction with SNF4 region.

Belongs to the 5'-AMP-activated protein kinase beta subunit family. As to quaternary structure, component of the SNF1 kinase complex, a heterotrimeric complex composed of the catalytic alpha subunit SNF1, one of the three related beta subunits SIP1, SIP2 or GAL83, and the regulatory gamma subunit SNF4. The beta subunit serves as a bridge between the catalytic and the regulatory subunit. Interacts (via KIS domain) with SNF1. Interacts (via ASC domain) with SNF4. Phosphorylated by SNF1 in vitro.

It is found in the cytoplasm. The protein resides in the vacuole membrane. Beta subunit of the SNF1 kinase complex, which is required for transcriptional, metabolic, and developmental adaptations in response to glucose limitation. Has a structural role, mediating heterotrimer formation, and a regulatory role, defining carbon source-regulated subcellular location and substrate specificity of the SNF1 kinase complex. Promotes the PKA-regulated relocalization of the SNF1 kinase complex to the vacuolar membrane in response to various types of carbon stress. This Saccharomyces cerevisiae (strain ATCC 204508 / S288c) (Baker's yeast) protein is SNF1 protein kinase subunit beta-1 (SIP1).